The primary structure comprises 111 residues: Nucleoid-associated protein NGK_1136 (111 aa).

This sequence belongs to the YbaB/EbfC family. Homodimer.

It localises to the cytoplasm. Its subcellular location is the nucleoid. Functionally, binds to DNA and alters its conformation. May be involved in regulation of gene expression, nucleoid organization and DNA protection. This is Nucleoid-associated protein NGK_1136 from Neisseria gonorrhoeae (strain NCCP11945).